The primary structure comprises 534 residues: MFS transporter fmqE (534 aa).

A run of 12 helical transmembrane segments spans residues 48 to 68 (LLLFAAYRVTHLAILPFVCAS), 109 to 129 (LWTSMTNLGQALGSLIAGFLA), 136 to 156 (WTAVSLAILSIVGTFILVFSS), 169 to 189 (GAVVGGLMAIGTTYAADVAPI), 194 to 214 (ALLQAIVFFGVAMQGVSLGIV), 228 to 248 (IVFGIQWAFATLVLIAAFLVP), 326 to 346 (AIGVPFLTQNIYFLITVGLNV), 349 to 369 (VFDIGIGGFFLGCLFVMLGWL), 379 to 399 (LWLWGLIGNFLCMVTIGALGF), 407 to 427 (LAIAVIMNVLISYGVYATVGV), 447 to 467 (VAFIVGAVGGWLFNFITPYMY), and 478 to 498 (TGFVYAGLTVVVAVISWFLVP).

The protein belongs to the major facilitator superfamily. Sugar transporter (TC 2.A.1.1) family.

The protein localises to the cytoplasmic vesicle membrane. Its function is as follows. MFS transporter; part of the gene cluster that mediates the biosynthesis of the antitumor cytotoxic peptidyl alkaloids fumiquinazolines that confer a dual-usage capability to defend against phagocytes in the environment and animal hosts. Probably involved in fumiquinazolines metabolism and transport. The polypeptide is MFS transporter fmqE (Aspergillus fumigatus (strain ATCC MYA-4609 / CBS 101355 / FGSC A1100 / Af293) (Neosartorya fumigata)).